A 313-amino-acid chain; its full sequence is Aspartate carbamoyltransferase catalytic subunit (313 aa).

Carbamoyl phosphate-binding residues include arginine 58 and threonine 59. Residue lysine 86 coordinates L-aspartate. Carbamoyl phosphate-binding residues include arginine 108, histidine 136, and glutamine 139. Residues arginine 169 and arginine 223 each contribute to the L-aspartate site. Carbamoyl phosphate-binding residues include glycine 265 and proline 266.

The protein belongs to the aspartate/ornithine carbamoyltransferase superfamily. ATCase family. In terms of assembly, heterododecamer (2C3:3R2) of six catalytic PyrB chains organized as two trimers (C3), and six regulatory PyrI chains organized as three dimers (R2).

It carries out the reaction carbamoyl phosphate + L-aspartate = N-carbamoyl-L-aspartate + phosphate + H(+). It functions in the pathway pyrimidine metabolism; UMP biosynthesis via de novo pathway; (S)-dihydroorotate from bicarbonate: step 2/3. In terms of biological role, catalyzes the condensation of carbamoyl phosphate and aspartate to form carbamoyl aspartate and inorganic phosphate, the committed step in the de novo pyrimidine nucleotide biosynthesis pathway. In Anaeromyxobacter dehalogenans (strain 2CP-1 / ATCC BAA-258), this protein is Aspartate carbamoyltransferase catalytic subunit.